Here is a 350-residue protein sequence, read N- to C-terminus: Casein kinase II subunit alpha' (350 aa).

Y13 is subject to Phosphotyrosine. Phosphoserine occurs at positions 18 and 21. Residues 40–325 (YQLVRKLGRG…AKEAMEHPYF (286 aa)) enclose the Protein kinase domain. ATP-binding positions include 46-54 (LGRGKYSEV) and K69. K97 bears the N6-acetyllysine mark. The active-site Proton acceptor is D157. S288 is modified (phosphoserine).

The protein belongs to the protein kinase superfamily. Ser/Thr protein kinase family. CK2 subfamily. In terms of assembly, heterotetramer composed of two catalytic subunits (alpha chain and/or alpha' chain) and two regulatory subunits (beta chains). The tetramer can exist as a combination of 2 alpha/2 beta, 2 alpha'/2 beta or 1 alpha/1 alpha'/2 beta subunits. Also part of a CK2-SPT16-SSRP1 complex composed of SSRP1, SUPT16H, CSNK2A1, CSNK2A2 and CSNK2B, which forms following UV irradiation. Interacts with RNPS1. Interacts with CSNK2A2IP (via C-terminus). Interacts with SIRT6; preventing CSNK2A2 localization to the nucleus. Interacts with HIRIP3. Highly expressed in brain, testis and mature epididymal spermatozoa. Weakly expressed in kidney, liver, lung, spleen and thymus (at protein level).

It is found in the nucleus. The protein localises to the cytoplasm. The enzyme catalyses L-seryl-[protein] + ATP = O-phospho-L-seryl-[protein] + ADP + H(+). It carries out the reaction L-threonyl-[protein] + ATP = O-phospho-L-threonyl-[protein] + ADP + H(+). Its activity is regulated as follows. Constitutively active protein kinase whose activity is not directly affected by phosphorylation. Seems to be regulated by level of expression and localization. Its function is as follows. Catalytic subunit of a constitutively active serine/threonine-protein kinase complex that phosphorylates a large number of substrates containing acidic residues C-terminal to the phosphorylated serine or threonine. Regulates numerous cellular processes, such as cell cycle progression, apoptosis and transcription, as well as viral infection. May act as a regulatory node which integrates and coordinates numerous signals leading to an appropriate cellular response. During mitosis, functions as a component of the p53/TP53-dependent spindle assembly checkpoint (SAC) that maintains cyclin-B-CDK1 activity and G2 arrest in response to spindle damage. Also required for p53/TP53-mediated apoptosis, phosphorylating 'Ser-392' of p53/TP53 following UV irradiation. Phosphorylates a number of DNA repair proteins in response to DNA damage, such as MDC1, RAD9A, RAD51 and HTATSF1, promoting their recruitment to DNA damage sites. Can also negatively regulate apoptosis. Phosphorylates the caspases CASP9 and CASP2 and the apoptotic regulator NOL3. Phosphorylation protects CASP9 from cleavage and activation by CASP8, and inhibits the dimerization of CASP2 and activation of CASP8. Regulates transcription by direct phosphorylation of RNA polymerases I, II, III and IV. Also phosphorylates and regulates numerous transcription factors including NF-kappa-B, STAT1, CREB1, IRF1, IRF2, ATF1, SRF, MAX, JUN, FOS, MYC and MYB. Phosphorylates Hsp90 and its co-chaperones FKBP4 and CDC37, which is essential for chaperone function. Regulates Wnt signaling by phosphorylating CTNNB1 and the transcription factor LEF1. Acts as an ectokinase that phosphorylates several extracellular proteins. May phosphorylate histone H2A on 'Ser-1'. This Mus musculus (Mouse) protein is Casein kinase II subunit alpha' (Csnk2a2).